Reading from the N-terminus, the 96-residue chain is Large ribosomal subunit protein bL28 (96 aa).

A disordered region spans residues 1–23 (MSRVCELSGKAPMTGNTVSHANN).

This sequence belongs to the bacterial ribosomal protein bL28 family.

The protein is Large ribosomal subunit protein bL28 of Cereibacter sphaeroides (strain ATCC 17025 / ATH 2.4.3) (Rhodobacter sphaeroides).